The chain runs to 1268 residues: Neurocan core protein (1268 aa).

Residues 1 to 22 (MGAGSVWASGLLLLWLLLLVAG) form the signal peptide. An Ig-like V-type domain is found at 37-157 (RMLKSGSGPV…EQDLVTLEVT (121 aa)). 5 disulfide bridges follow: C58/C139, C181/C252, C205/C226, C279/C354, and C303/C324. A glycan (N-linked (GlcNAc...) asparagine) is linked at N121. 2 Link domains span residues 159 to 254 (VVFH…YCFA) and 258 to 356 (GGEV…YCFR). Residue N339 is glycosylated (N-linked (GlcNAc...) asparagine). Disordered stretches follow at residues 363–391 (QHGD…ELKP), 406–442 (PLMS…SWPS), 472–540 (PLGT…DQSH), and 574–630 (ISPS…LQAS). O-linked (Xyl...) (chondroitin sulfate) serine glycosylation is found at S380 and S410. Residues 419–430 (TWTQAPEETLGS) are compositionally biased toward polar residues. Low complexity predominate over residues 575–585 (SPSVPSTESTP). Residues 608 to 617 (PSEPPAPSPG) show a composition bias toward pro residues. The span at 618-630 (PSEALSAVSLQAS) shows a compositional bias: low complexity. An N-linked (GlcNAc...) asparagine glycan is attached at N742. An EGF-like 1 domain is found at 960-996 (PTDPCENNPCLHGGTCHTNGTVYGCSCDQGYAGENCE). Cystine bridges form between C964–C975, C969–C984, C986–C995, C1002–C1013, C1007–C1022, C1024–C1033, C1040–C1051, C1068–C1160, C1136–C1152, C1167–C1210, and C1196–C1223. A glycan (N-linked (GlcNAc...) asparagine) is linked at N978. Positions 998–1034 (DIDDCLCSPCENGGTCIDEVNGFICLCLPSYGGSLCE) constitute an EGF-like 2; calcium-binding domain. The C-type lectin domain occupies 1036-1165 (DTEGCDRGWH…LPYVCKKGTV (130 aa)). The region spanning 1165 to 1225 (VLCGPPPAVE…WDRPQIMCIK (61 aa)) is the Sushi domain. Residue N1175 is glycosylated (N-linked (GlcNAc...) asparagine). Residues 1228 to 1255 (RSHRMRRHHHHPHRHHKPRKEHRKHKRH) show a composition bias toward basic residues. The tract at residues 1228–1268 (RSHRMRRHHHHPHRHHKPRKEHRKHKRHPAEDWEKDEGDFC) is disordered.

The protein belongs to the aggrecan/versican proteoglycan family. Post-translationally, O-glycosylated; contains chondroitin sulfate. As to expression, brain.

It localises to the secreted. In terms of biological role, may modulate neuronal adhesion and neurite growth during development by binding to neural cell adhesion molecules (NG-CAM and N-CAM). Chondroitin sulfate proteoglycan; binds to hyaluronic acid. This Mus musculus (Mouse) protein is Neurocan core protein (Ncan).